A 506-amino-acid polypeptide reads, in one-letter code: AMP phosphorylase (506 aa).

AMP-binding positions include Gly-168, 194–199 (SRAITG), and Thr-203. Asp-256 acts as the Proton donor in catalysis. Positions 264 and 288 each coordinate AMP.

This sequence belongs to the thymidine/pyrimidine-nucleoside phosphorylase family. Type 2 subfamily.

It catalyses the reaction AMP + phosphate = alpha-D-ribose 1,5-bisphosphate + adenine. The catalysed reaction is CMP + phosphate = cytosine + alpha-D-ribose 1,5-bisphosphate. It carries out the reaction UMP + phosphate = alpha-D-ribose 1,5-bisphosphate + uracil. Functionally, catalyzes the conversion of AMP and phosphate to adenine and ribose 1,5-bisphosphate (R15P). Exhibits phosphorylase activity toward CMP and UMP in addition to AMP. Functions in an archaeal AMP degradation pathway, together with R15P isomerase and RubisCO. The chain is AMP phosphorylase from Methanococcoides burtonii (strain DSM 6242 / NBRC 107633 / OCM 468 / ACE-M).